The primary structure comprises 880 residues: GAS2-like protein 2 (880 aa).

Positions 32 to 159 (EAMKEDLAEW…CLLELGRRAW (128 aa)) constitute a Calponin-homology (CH) domain. Positions 180–200 (RRELALPPPDPSPPAPPRRQP) are disordered. A compositionally biased stretch (pro residues) spans 185 to 198 (LPPPDPSPPAPPRR). The region spanning 201-273 (CHFRNLDQMV…HYLDKHDPCR (73 aa)) is the GAR domain. 4 disordered regions span residues 283–360 (SFLK…MAPF), 372–437 (WRQP…NPTP), 489–533 (ESVR…ELGR), and 676–880 (APTG…ESWV). The segment covering 301–315 (GPSQTQPTMTISRSQ) has biased composition (polar residues). The interval 438 to 880 (QRLRAIEATT…PLPPEEESWV (443 aa)) is interaction with ADORA2A. Positions 506–515 (RLPPARPPTP) are enriched in pro residues. Over residues 725–734 (QDCSASTVSA) the composition is skewed to polar residues. 2 stretches are compositionally biased toward basic residues: residues 757–767 (KGRRTLRKPKR) and 774–785 (LKLRPRIRPRRD).

The protein belongs to the GAS2 family. In terms of assembly, interacts with ADORA2A (via its cytoplasmic C-terminal domain). Interacts with GNAS, GNAL, GNAQ, and GNA13. Interacts with MAPRE1. In terms of tissue distribution, expressed in bronchial and nasal epithelial cells (at protein level). Expressed in brain, kidney, lung, testis, fallopian tubes, and skeletal muscle. Expressed at low levels in stomach and colon.

Its subcellular location is the cytoplasm. It localises to the cytoskeleton. It is found in the cell membrane. The protein resides in the stress fiber. The protein localises to the cilium basal body. Involved in the cross-linking of microtubules and microfilaments. Regulates microtubule dynamics and stability by interacting with microtubule plus-end tracking proteins, such as MAPRE1, to regulate microtubule growth along actin stress fibers. Enhances ADORA2-mediated adenylyl cyclase activation by acting as a scaffold to recruit trimeric G-protein complexes to ADORA2A. Regulates ciliary orientation and performance in cells located in the airway. The polypeptide is GAS2-like protein 2 (GAS2L2) (Homo sapiens (Human)).